A 105-amino-acid polypeptide reads, in one-letter code: Large ribosomal subunit protein uL23 (105 aa).

The protein belongs to the universal ribosomal protein uL23 family. In terms of assembly, part of the 50S ribosomal subunit. Contacts protein L29, and trigger factor when it is bound to the ribosome.

One of the early assembly proteins it binds 23S rRNA. One of the proteins that surrounds the polypeptide exit tunnel on the outside of the ribosome. Forms the main docking site for trigger factor binding to the ribosome. The chain is Large ribosomal subunit protein uL23 from Janthinobacterium sp. (strain Marseille) (Minibacterium massiliensis).